A 36-amino-acid chain; its full sequence is Conotoxin Bt11.4 (36 aa).

Cystine bridges form between Cys2–Cys16, Cys9–Cys21, Cys15–Cys26, and Cys20–Cys33.

This sequence belongs to the conotoxin I1 superfamily. In terms of tissue distribution, expressed by the venom duct.

The protein resides in the secreted. This Conus betulinus (Beech cone) protein is Conotoxin Bt11.4.